The primary structure comprises 253 residues: RNA polymerase sigma factor SigI6 (253 aa).

The short motif at 63–76 (EEYSVALLAFNEAI) is the Polymerase core binding element. The H-T-H motif DNA-binding region spans 203–222 (TLELLKLAKVSRRTIERNKK).

It belongs to the sigma-70 factor family. SigI subfamily. In terms of assembly, interacts with RsgI6.

It localises to the cytoplasm. Its activity is regulated as follows. Negatively regulated by the anti-sigma-I factor RsgI6. Binding of the polysaccharide substrate to RsgI6 may lead to the release and activation of SigI6. Sigma factors are initiation factors that promote the attachment of RNA polymerase to specific initiation sites and are then released. This sigma factor is involved in regulation of cellulosomal genes via an external polysaccharide-sensing mechanism. Recognizes the predicted promoters associated with sigI6 itself, xyn11B, xyn10D, xyn10Z, xyn10Y, cel9V, cseP, sigI1, cipA, and rsgI5. In Acetivibrio thermocellus (strain ATCC 27405 / DSM 1237 / JCM 9322 / NBRC 103400 / NCIMB 10682 / NRRL B-4536 / VPI 7372) (Clostridium thermocellum), this protein is RNA polymerase sigma factor SigI6.